Here is a 382-residue protein sequence, read N- to C-terminus: Kelch domain-containing protein 3 (382 aa).

Kelch repeat units follow at residues 25–77, 88–138, 139–189, 191–249, and 251–301; these read RVYS…PYMR, TVLL…VLGK, IMYI…TMLG, HMYV…GYNG, and LYIF…IVGD.

As to quaternary structure, component of a CRL2(KLHDC3) complex, also named ECS(KLHDC3) complex, composed of CUL2, Elongin BC (ELOB and ELOC), RBX1 and substrate-specific adapter KLHDC3. May form oligomers as a KLHDC3-ELOB-ELOC complex; this interaction is likely autoinhibitory for the E3 ligase complex.

It localises to the cytoplasm. Its pathway is protein modification; protein ubiquitination. Its function is as follows. Substrate-recognition component of a Cul2-RING (CRL2) E3 ubiquitin-protein ligase complex of the DesCEND (destruction via C-end degrons) pathway, which recognizes a C-degron located at the extreme C terminus of target proteins, leading to their ubiquitination and degradation. The C-degron recognized by the DesCEND pathway is usually a motif of less than ten residues and can be present in full-length proteins, truncated proteins or proteolytically cleaved forms. The CRL2(KLHDC3) complex specifically recognizes proteins with a glycine (Gly) at the C-terminus, leading to their ubiquitination and degradation: recognizes the C-terminal -Arg-(Xaa)n-Arg-Gly, -Arg-(Xaa)n-Lys-Gly, and -Arg-(Xaa)n-Gln-Gly degrons. The CRL2(KLHDC3) complex mediates ubiquitination and degradation of truncated SELENOV and SEPHS2 selenoproteins produced by failed UGA/Sec decoding, which end with a glycine. May be involved in meiotic recombination process. This chain is Kelch domain-containing protein 3, found in Homo sapiens (Human).